The sequence spans 921 residues: Isoleucine--tRNA ligase (921 aa).

The short motif at Pro59–His69 is the 'HIGH' region element. Glu569 contacts L-isoleucyl-5'-AMP. A 'KMSKS' region motif is present at residues Lys610–Ser614. Residue Lys613 coordinates ATP. 4 residues coordinate Zn(2+): Cys894, Cys897, Cys909, and Cys912.

This sequence belongs to the class-I aminoacyl-tRNA synthetase family. IleS type 1 subfamily. As to quaternary structure, monomer. Zn(2+) serves as cofactor.

The protein resides in the cytoplasm. The enzyme catalyses tRNA(Ile) + L-isoleucine + ATP = L-isoleucyl-tRNA(Ile) + AMP + diphosphate. Catalyzes the attachment of isoleucine to tRNA(Ile). As IleRS can inadvertently accommodate and process structurally similar amino acids such as valine, to avoid such errors it has two additional distinct tRNA(Ile)-dependent editing activities. One activity is designated as 'pretransfer' editing and involves the hydrolysis of activated Val-AMP. The other activity is designated 'posttransfer' editing and involves deacylation of mischarged Val-tRNA(Ile). The sequence is that of Isoleucine--tRNA ligase from Campylobacter lari (strain RM2100 / D67 / ATCC BAA-1060).